The sequence spans 158 residues: C-type lectin galactose-binding isoform (158 aa).

The signal sequence occupies residues M1 to G20. Intrachain disulfides connect C26-C37, C54-C154, and C129-C146. A C-type lectin domain is found at K33–Q155. The Ca(2+) site is built by Q119, D121, E127, N142, and D143. The Galactose-binding signature appears at Q119 to D121.

Belongs to the true venom lectin family. In terms of assembly, homodimer; disulfide-linked. As to expression, expressed by the venom gland.

The protein resides in the secreted. Its function is as follows. Galactose-binding lectin that binds to and agglutinates erythrocytes in a calcium-dependent manner. The sequence is that of C-type lectin galactose-binding isoform from Hoplocephalus stephensii (Stephens's banded snake).